A 390-amino-acid chain; its full sequence is Pyruvate dehydrogenase E1 component subunit alpha, somatic form, mitochondrial (390 aa).

The N-terminal 29 residues, 1 to 29 (MRKMLAAVSRVLAGAAQKPASRVLVASRN), are a transit peptide targeting the mitochondrion. Lys-63 carries the post-translational modification N6-acetyllysine; alternate. N6-succinyllysine; alternate is present on Lys-63. Pyruvate is bound by residues His-92, Tyr-118, Arg-119, Ala-157, Gly-165, Val-167, Asp-196, Gly-197, Ala-198, Asn-225, and Tyr-227. Thiamine diphosphate-binding residues include Tyr-118 and Arg-119. Gly-165, Val-167, Asp-196, Gly-197, Ala-198, and Asn-225 together coordinate thiamine diphosphate. Asp-196 serves as a coordination point for Mg(2+). 2 residues coordinate Mg(2+): Asn-225 and Tyr-227. Ser-232 bears the Phosphoserine; by PDK1 mark. At Lys-244 the chain carries N6-acetyllysine; alternate. At Lys-244 the chain carries N6-succinyllysine; alternate. Lys-267 is subject to N6-acetyllysine. Lys-277 is modified (N6-succinyllysine). His-292 contacts thiamine diphosphate. At Ser-293 the chain carries Phosphoserine; by PDK1, PDK2, PDK3 and PDK4. Ser-295 carries the phosphoserine modification. Position 300 is a phosphoserine; by PDK1, PDK2, PDK3 and PDK4 (Ser-300). A Phosphotyrosine modification is found at Tyr-301. Position 313 is an N6-acetyllysine; alternate (Lys-313). Lys-313 bears the N6-succinyllysine; alternate mark. N6-acetyllysine is present on residues Lys-321 and Lys-336. N6-succinyllysine is present on Lys-385.

Heterotetramer of two PDHA1 and two PDHB subunits. The heterotetramer interacts with DLAT, and is part of the multimeric pyruvate dehydrogenase complex that contains multiple copies of pyruvate dehydrogenase (E1), dihydrolipoamide acetyltransferase (DLAT, E2) and lipoamide dehydrogenase (DLD, E3). These subunits are bound to an inner core composed of about 48 DLAT and 12 PDHX molecules. It depends on thiamine diphosphate as a cofactor. Requires Mg(2+) as cofactor. In terms of processing, phosphorylation at Ser-232, Ser-293 and Ser-300 by PDK family kinases inactivates the enzyme; for this phosphorylation at a single site is sufficient. Phosphorylation at Ser-293 interferes with access to active site, and thereby inactivates the enzyme. Dephosphorylation at all three sites, i.e. at Ser-232, Ser-293 and Ser-300, is required for reactivation. Acetylation alters the phosphorylation pattern. Deacetylated by SIRT3. As to expression, in all tissues, but in very low amount in testis.

It localises to the mitochondrion matrix. It catalyses the reaction N(6)-[(R)-lipoyl]-L-lysyl-[protein] + pyruvate + H(+) = N(6)-[(R)-S(8)-acetyldihydrolipoyl]-L-lysyl-[protein] + CO2. With respect to regulation, pyruvate dehydrogenase activity is inhibited by phosphorylation of PDHA1; it is reactivated by dephosphorylation. In terms of biological role, the pyruvate dehydrogenase complex catalyzes the overall conversion of pyruvate to acetyl-CoA and CO(2), and thereby links the glycolytic pathway to the tricarboxylic cycle. The chain is Pyruvate dehydrogenase E1 component subunit alpha, somatic form, mitochondrial (Pdha1) from Rattus norvegicus (Rat).